We begin with the raw amino-acid sequence, 205 residues long: ATP-dependent Clp protease proteolytic subunit (205 aa).

The Nucleophile role is filled by Ser107. Residue His132 is part of the active site.

This sequence belongs to the peptidase S14 family. Fourteen ClpP subunits assemble into 2 heptameric rings which stack back to back to give a disk-like structure with a central cavity, resembling the structure of eukaryotic proteasomes.

It is found in the cytoplasm. The enzyme catalyses Hydrolysis of proteins to small peptides in the presence of ATP and magnesium. alpha-casein is the usual test substrate. In the absence of ATP, only oligopeptides shorter than five residues are hydrolyzed (such as succinyl-Leu-Tyr-|-NHMec, and Leu-Tyr-Leu-|-Tyr-Trp, in which cleavage of the -Tyr-|-Leu- and -Tyr-|-Trp bonds also occurs).. Functionally, cleaves peptides in various proteins in a process that requires ATP hydrolysis. Has a chymotrypsin-like activity. Plays a major role in the degradation of misfolded proteins. This is ATP-dependent Clp protease proteolytic subunit from Pseudoalteromonas translucida (strain TAC 125).